Here is a 368-residue protein sequence, read N- to C-terminus: N-acetylneuraminate epimerase (368 aa).

Positions 1–19 are cleaved as a signal peptide; the sequence is MNKTITALAIIMASFAANA. 7 Kelch repeats span residues 40–84, 86–137, 139–173, 174–219, 222–265, 287–336, and 338–367; these read TVYI…AFID, NLYV…FVHN, KAYV…KINA, YYFD…VNKG, TWLI…VAGG, ENYQ…PWNN, and LLII…VTVQ. The active-site Proton acceptor is the Glu-228.

It belongs to the NanM family. Homodimer.

It localises to the periplasm. It carries out the reaction N-acetyl-alpha-neuraminate = N-acetyl-beta-neuraminate. In terms of biological role, converts alpha-N-acetylneuranimic acid (Neu5Ac) to the beta-anomer, accelerating the equilibrium between the alpha- and beta-anomers. Probably facilitates sialidase-negative bacteria to compete successfully for limited amounts of extracellular Neu5Ac, which is likely taken up in the beta-anomer. In addition, the rapid removal of sialic acid from solution might be advantageous to the bacterium to damp down host responses. This chain is N-acetylneuraminate epimerase, found in Escherichia coli O139:H28 (strain E24377A / ETEC).